The primary structure comprises 265 residues: Proline-rich protein 23B (265 aa).

Low complexity predominate over residues 1–18 (MVSRPRSPSAFPAPWWGQ). Disordered regions lie at residues 1–49 (MVSR…EDPA) and 226–265 (PSSP…LFQA). The segment covering 226–237 (PSSPLQPLPPSP) has biased composition (pro residues). Over residues 256-265 (CKARRRLFQA) the composition is skewed to basic residues.

The protein belongs to the PRR23 family.

The sequence is that of Proline-rich protein 23B (PRR23B) from Homo sapiens (Human).